Reading from the N-terminus, the 430-residue chain is Threonine synthase (430 aa).

K108 is modified (N6-(pyridoxal phosphate)lysine).

It belongs to the threonine synthase family. Pyridoxal 5'-phosphate is required as a cofactor.

The enzyme catalyses O-phospho-L-homoserine + H2O = L-threonine + phosphate. It functions in the pathway amino-acid biosynthesis; L-threonine biosynthesis; L-threonine from L-aspartate: step 5/5. In terms of biological role, catalyzes the gamma-elimination of phosphate from L-phosphohomoserine and the beta-addition of water to produce L-threonine. This chain is Threonine synthase (thrC), found in Buchnera aphidicola subsp. Baizongia pistaciae (strain Bp).